A 610-amino-acid chain; its full sequence is Dopamine beta-hydroxylase (610 aa).

At 1-9 (MQVPSPSVR) the chain is on the cytoplasmic side. Residues 10–30 (EAASMYGTAVAVFLVILVAAL) form a helical; Signal-anchor for type II membrane protein membrane-spanning segment. The Intragranular segment spans residues 31–610 (QGSAPAESPF…TVLNISGGKG (580 aa)). The region spanning 50–166 (GTLELSWNIS…GTVHLVYGFL (117 aa)) is the DOMON domain. Intrachain disulfides connect cysteine 147-cysteine 589, cysteine 225-cysteine 276, cysteine 262-cysteine 288, cysteine 383-cysteine 496, cysteine 387-cysteine 558, and cysteine 459-cysteine 481. N-linked (GlcNAc...) asparagine glycosylation occurs at asparagine 177. Residue tyrosine 223 is part of the active site. Cu(2+) is bound by residues histidine 255 and histidine 256. Cu(2+) contacts are provided by histidine 326, histidine 405, histidine 407, and methionine 480. Histidine 405 is a catalytic residue. Residue asparagine 559 is glycosylated (N-linked (GlcNAc...) asparagine). A disordered region spans residues 585 to 610 (PTPHCPASQAQSPAGPTVLNISGGKG).

Belongs to the copper type II ascorbate-dependent monooxygenase family. Homotetramer; composed of two disulfide-linked dimers. Cu(2+) serves as cofactor. Proteolytic cleavage after the membrane-anchor leads to the release of the soluble form. Post-translationally, N-glycosylated. In terms of tissue distribution, detected in chromaffin granules in the adrenal medulla (at protein level). Detected in adrenal medulla.

It is found in the cytoplasmic vesicle. It localises to the secretory vesicle lumen. The protein resides in the secretory vesicle. The protein localises to the chromaffin granule lumen. Its subcellular location is the secretory vesicle membrane. It is found in the chromaffin granule membrane. It carries out the reaction dopamine + 2 L-ascorbate + O2 = (R)-noradrenaline + 2 monodehydro-L-ascorbate radical + H2O. It functions in the pathway catecholamine biosynthesis; (R)-noradrenaline biosynthesis; (R)-noradrenaline from dopamine: step 1/1. Its function is as follows. Catalyzes the hydroxylation of dopamine to noradrenaline (also known as norepinephrine), and is thus vital for regulation of these neurotransmitters. In Bos taurus (Bovine), this protein is Dopamine beta-hydroxylase (DBH).